A 405-amino-acid polypeptide reads, in one-letter code: CMP-sialic acid transporter 3 (405 aa).

At 1–39 (MKNGIAECPACHSKLVSPGSKTISRAYDDHKIRVSSKQR) the chain is on the cytoplasmic side. A helical transmembrane segment spans residues 40–60 (VLNVLLVVGDCMLVGLQPVLV). The Lumenal segment spans residues 61–73 (YMSKVDGKFNFSP). Residues 74-94 (ISVNFLTEIAKVIFAIVMLLI) form a helical membrane-spanning segment. Over 95–142 (QARHQKVGEKPLLSVSTFVQAARNNVLLAVPALLYAINNYLKFTMQLY) the chain is Cytoplasmic. The helical transmembrane segment at 143 to 163 (FNPATVKMLSNLKVLVIAVLL) threads the bilayer. Over 164 to 170 (KMVMKRR) the chain is Lumenal. The helical transmembrane segment at 171-191 (FSIIQWEALALLLIGISVNQL) threads the bilayer. Residues 192-199 (RSLPEGAT) are Cytoplasmic-facing. The chain crosses the membrane as a helical span at residues 200 to 220 (AIGIPLATGAYVCTVIFVTVP). The Lumenal portion of the chain corresponds to 221-243 (SMASVFNEYALKSQYDTSIYLQN). Residues 244 to 264 (LFLYGYGAIFNFLGILGTVIY) form a helical membrane-spanning segment. The Cytoplasmic segment spans residues 265–280 (KGPGSFDILQGHSRAT). Residues 281 to 301 (MFLILNNAAQGILSSFFFKYA) traverse the membrane as a helical segment. At 302–321 (DTILKKYSSTVATIFTGIAS) the chain is on the lumenal side. The chain crosses the membrane as a helical span at residues 322–342 (AALFGHVITMNFLLGISIVFI). The Cytoplasmic portion of the chain corresponds to 343–405 (SMHQFFSPLA…SDDRTPLLPR (63 aa)). The segment at 385-405 (GANEEASHRGESDDRTPLLPR) is disordered. A compositionally biased stretch (basic and acidic residues) spans 389-405 (EASHRGESDDRTPLLPR).

It belongs to the nucleotide-sugar transporter family. CMP-Sialate:CMP antiporter (TC 2.A.7.12) subfamily.

Its subcellular location is the golgi apparatus membrane. In terms of biological role, sugar transporter involved in the transport of CMP-sialic acid from the cytoplasm into the Golgi. The chain is CMP-sialic acid transporter 3 (UTR6) from Arabidopsis thaliana (Mouse-ear cress).